Reading from the N-terminus, the 494-residue chain is Alpha-amylase-related protein (494 aa).

The signal sequence occupies residues 1–20; sequence MFKFAAAVILCLVAASSTLA. A Pyrrolidone carboxylic acid modification is found at Gln21. Cys48 and Cys104 form a disulfide bridge. The Ca(2+) site is built by Asn118, Gln169, and Asp178. A disulfide bridge links Cys157 with Cys171. Arg206 contacts chloride. Catalysis depends on Asp208, which acts as the Nucleophile. His212 is a binding site for Ca(2+). Glu245 acts as the Proton donor in catalysis. Residues Asn308 and Arg343 each coordinate chloride. 3 disulfide bridges follow: Cys376–Cys382, Cys418–Cys441, and Cys448–Cys460.

The protein belongs to the glycosyl hydrolase 13 family. In terms of assembly, monomer. It depends on Ca(2+) as a cofactor. The cofactor is chloride.

It localises to the secreted. It carries out the reaction Endohydrolysis of (1-&gt;4)-alpha-D-glucosidic linkages in polysaccharides containing three or more (1-&gt;4)-alpha-linked D-glucose units.. This Drosophila atripex (Fruit fly) protein is Alpha-amylase-related protein (Amyrel).